The sequence spans 74 residues: Porwaprin-a (74 aa).

A signal peptide spans 1 to 24 (MSSGGLLLLLGLLTLWEVLTPVSS). The WAP domain occupies 27–71 (RPKKLGLCPPRPQKPCVKECKNDWSCPGQQKCCNYGCIDECRDPI). Cystine bridges form between cysteine 34–cysteine 59, cysteine 42–cysteine 63, cysteine 46–cysteine 58, and cysteine 52–cysteine 67.

Belongs to the venom waprin family. As to expression, expressed by the venom gland.

It localises to the secreted. Functionally, damages membranes of susceptible bacteria. Has no hemolytic activity. Not toxic to mice. Does not inhibit the proteinases elastase and cathepsin G. This is Porwaprin-a from Pseudechis porphyriacus (Red-bellied black snake).